The primary structure comprises 417 residues: Phosphoglycerate kinase 2 (417 aa).

Residues V23, D24, F25, N26, N38, R39, S62, H63, G65, R66, L121, R122, H168, and R169 each coordinate (2R)-3-phosphoglycerate. G212 is an ADP binding site. G212 provides a ligand contact to CDP. 2 residues coordinate AMP: A213 and K214. An ATP-binding site is contributed by A213. A213 is a Mg(2+) binding site. D217 lines the CDP pocket. D217 contacts Mg(2+). An AMP-binding site is contributed by K218. K218 is a binding site for ATP. G236 contributes to the ADP binding site. Residue G236 coordinates CDP. AMP contacts are provided by G237 and G312. Residues G237 and G312 each contribute to the ATP site. Residues G337 and F342 each contribute to the CDP site. ADP is bound at residue F342. E343 is an AMP binding site. 3 residues coordinate ATP: E343, D374, and T375. Residue D374 participates in Mg(2+) binding.

The protein belongs to the phosphoglycerate kinase family. As to quaternary structure, monomer. Mg(2+) serves as cofactor.

The protein resides in the cytoplasm. It is found in the mitochondrion. It carries out the reaction (2R)-3-phosphoglycerate + ATP = (2R)-3-phospho-glyceroyl phosphate + ADP. Its pathway is carbohydrate degradation; glycolysis; pyruvate from D-glyceraldehyde 3-phosphate: step 2/5. Its function is as follows. Catalyzes one of the two ATP producing reactions in the glycolytic pathway via the reversible conversion of 1,3-diphosphoglycerate to 3-phosphoglycerate. Both L- and D- forms of purine and pyrimidine nucleotides can be used as substrates, but the activity is much lower on pyrimidines. Negatively regulates the biosynthesis of acetyl-CoA from pyruvate in the mitochondrion. The chain is Phosphoglycerate kinase 2 (PGK2) from Rhizopus niveus.